We begin with the raw amino-acid sequence, 208 residues long: MAYVNEQNPQFLLYNGMHNQTHSTPQYHNHHHHHHQSPTYPQSYFNPYSHQSYQQHHLNSDVNFQMVPQSTSVPPDPFCSIEPMETNVQAKEQILEEIVRECEEIERRSNSSASPASNWSSDEHDSQSEKSYHPYKTPEKKERKKAQNRLAATRYREKKRREKEEAMTCIEGLSVTNGKLKDQVSELEREIRYFKKFMTEMGMKTVTD.

2 disordered regions span residues 18–47 (HNQT…YFNP) and 106–165 (ERRS…EKEE). Residues 110-120 (NSSASPASNWS) are compositionally biased toward low complexity. The span at 121 to 141 (SDEHDSQSEKSYHPYKTPEKK) shows a compositional bias: basic and acidic residues. One can recognise a bZIP domain in the interval 138–201 (PEKKERKKAQ…RYFKKFMTEM (64 aa)). The tract at residues 140–163 (KKERKKAQNRLAATRYREKKRREK) is basic motif. The leucine-zipper stretch occupies residues 173–187 (LSVTNGKLKDQVSEL).

This sequence belongs to the bZIP family.

The protein localises to the nucleus. In terms of biological role, transcription factor. Involved in positively modulating longevity and stress tolerance, probably acting by positively regulating expression of transsulfuration enzyme cth-2, leading to increased hydrogen sulfide production and therefore increased protein persulfidation, a protective modification of redox-reactive cysteines. May mediate longevity and increased stress resistance induced by mTORC1 suppression. This chain is Transcription factor atf-4 homolog, found in Caenorhabditis elegans.